The primary structure comprises 996 residues: Alanine--tRNA ligase, chloroplastic/mitochondrial (996 aa).

Residues His677, His681, Cys779, and His783 each contribute to the Zn(2+) site.

The protein belongs to the class-II aminoacyl-tRNA synthetase family. As to quaternary structure, monomer. It depends on Zn(2+) as a cofactor.

The protein localises to the plastid. It is found in the chloroplast. Its subcellular location is the mitochondrion. It carries out the reaction tRNA(Ala) + L-alanine + ATP = L-alanyl-tRNA(Ala) + AMP + diphosphate. Functionally, catalyzes the attachment of alanine to tRNA(Ala) in a two-step reaction: alanine is first activated by ATP to form Ala-AMP and then transferred to the acceptor end of tRNA(Ala). Also edits incorrectly charged tRNA(Ala) via its editing domain. In Oryza sativa subsp. japonica (Rice), this protein is Alanine--tRNA ligase, chloroplastic/mitochondrial.